The chain runs to 360 residues: Phospho-N-acetylmuramoyl-pentapeptide-transferase (360 aa).

Topologically, residues 1 to 25 (MLVWLAEHLVKYYSGFNVFSYLTFR) are periplasmic. Residues 26-46 (AIVSLLTALFISLWMGPRMIA) traverse the membrane as a helical segment. Residues 47 to 71 (HLQKLSFGQVVRNDGPESHFSKRGT) lie on the Cytoplasmic side of the membrane. Residues 72–92 (PTMGGIMILTAIVISVLLWAY) traverse the membrane as a helical segment. Position 93 (P93) is a topological domain, periplasmic. A helical membrane pass occupies residues 94-114 (SNPYVWCVLVVLVGYGVIGFV). The Cytoplasmic segment spans residues 115–131 (DDYRKVVRKDTKGLIAR). A helical membrane pass occupies residues 132–152 (WKYFWMSVIALGVAFALYLAG). The Periplasmic segment spans residues 153 to 167 (KDTPATQLVVPFFKD). A helical membrane pass occupies residues 168 to 188 (VMPQLGLFYILLAYFVIVGTG). The Cytoplasmic portion of the chain corresponds to 189–198 (NAVNLTDGLD). The chain crosses the membrane as a helical span at residues 199–219 (GLAIMPTVFVAGGFALVAWAT). Over 220 to 235 (GNMNFASYLHIPYLRH) the chain is Periplasmic. A helical transmembrane segment spans residues 236-256 (AGELVIVCTAIVGAGLGFLWF). The Cytoplasmic segment spans residues 257 to 262 (NTYPAQ). A helical transmembrane segment spans residues 263–283 (VFMGDVGSLALGGALGIIAVL). Residues 284-287 (LRQE) lie on the Periplasmic side of the membrane. A helical transmembrane segment spans residues 288–308 (FLLVIMGGVFVVETLSVILQV). Residues 309 to 337 (GSFKLRGQRIFRMAPIHHHYELKGWPEPR) lie on the Cytoplasmic side of the membrane. The helical transmembrane segment at 338 to 358 (VIVRFWIISLMLVLIGLATLK) threads the bilayer. Residues 359-360 (VR) are Periplasmic-facing.

Belongs to the glycosyltransferase 4 family. MraY subfamily. Requires Mg(2+) as cofactor.

Its subcellular location is the cell inner membrane. The catalysed reaction is UDP-N-acetyl-alpha-D-muramoyl-L-alanyl-gamma-D-glutamyl-meso-2,6-diaminopimeloyl-D-alanyl-D-alanine + di-trans,octa-cis-undecaprenyl phosphate = di-trans,octa-cis-undecaprenyl diphospho-N-acetyl-alpha-D-muramoyl-L-alanyl-D-glutamyl-meso-2,6-diaminopimeloyl-D-alanyl-D-alanine + UMP. It participates in cell wall biogenesis; peptidoglycan biosynthesis. In terms of biological role, catalyzes the initial step of the lipid cycle reactions in the biosynthesis of the cell wall peptidoglycan: transfers peptidoglycan precursor phospho-MurNAc-pentapeptide from UDP-MurNAc-pentapeptide onto the lipid carrier undecaprenyl phosphate, yielding undecaprenyl-pyrophosphoryl-MurNAc-pentapeptide, known as lipid I. The chain is Phospho-N-acetylmuramoyl-pentapeptide-transferase from Shigella boydii serotype 18 (strain CDC 3083-94 / BS512).